A 436-amino-acid chain; its full sequence is Ribulose bisphosphate carboxylase large chain (436 aa).

Substrate-binding residues include Asn-104 and Thr-154. The active-site Proton acceptor is the Lys-156. Lys-158 is a substrate binding site. The Mg(2+) site is built by Lys-182, Asp-184, and Glu-185. Lys-182 carries the post-translational modification N6-carboxylysine. The Proton acceptor role is filled by His-275. Substrate contacts are provided by Arg-276, His-308, and Ser-360.

It belongs to the RuBisCO large chain family. Type I subfamily. As to quaternary structure, heterohexadecamer of 8 large chains and 8 small chains. Mg(2+) is required as a cofactor.

It is found in the plastid. The protein resides in the chloroplast. The catalysed reaction is 2 (2R)-3-phosphoglycerate + 2 H(+) = D-ribulose 1,5-bisphosphate + CO2 + H2O. The enzyme catalyses D-ribulose 1,5-bisphosphate + O2 = 2-phosphoglycolate + (2R)-3-phosphoglycerate + 2 H(+). Functionally, ruBisCO catalyzes two reactions: the carboxylation of D-ribulose 1,5-bisphosphate, the primary event in carbon dioxide fixation, as well as the oxidative fragmentation of the pentose substrate in the photorespiration process. Both reactions occur simultaneously and in competition at the same active site. The sequence is that of Ribulose bisphosphate carboxylase large chain from Euglena stellata.